A 531-amino-acid polypeptide reads, in one-letter code: MSSKHATETARRRTFAIISHPDAGKTTITEKLLLFGGAIQLAGTVKGRKAARHATSDWMELEKQRGISVTSSVMQFPYKGRIVNLLDTPGHEDFSEDTYRTLTAVDSALMVIDVAKGVEERTIKLMDVCRMRDTPIMTFINKLDREGREPIDLLDEVEQVLKIQCAPVTWPIGMGKRFKGVYHIHNDAVHLYSPTHGGKIQHGEVIQGLDNPRLDELLGGQAAELREELELVMGASHSFDKAEYLAGRQTPVFFGSAINNFGVQELLDDFVEHAPGPLPRATESRTVDPAEETFSGFVFKIQANMDPQHRDRIAFLRVCSGTFSKGMKVHQVRIKRDVKISDALTFMASDREHVEEAYPGDIIGLHNHGTIRIGDTFTQGEQLIFTGIPNFAPELFRRAHLRDPLKMKQLQKGLQQLCEEGATQLFKPLTNNDLILGAVGVLQFDVVAHRLKAEYNVDASFENVNVQTARWVSCDNARKFEEFQEKAAANLAIDHGGDLVYIAPTRVNLQMAQEKWPEVRFHATREHGVAA.

The tr-type G domain occupies 10-278 (ARRRTFAIIS…DFVEHAPGPL (269 aa)). Residues 19 to 26 (SHPDAGKT), 87 to 91 (DTPGH), and 141 to 144 (NKLD) each bind GTP.

Belongs to the TRAFAC class translation factor GTPase superfamily. Classic translation factor GTPase family. PrfC subfamily.

The protein localises to the cytoplasm. Increases the formation of ribosomal termination complexes and stimulates activities of RF-1 and RF-2. It binds guanine nucleotides and has strong preference for UGA stop codons. It may interact directly with the ribosome. The stimulation of RF-1 and RF-2 is significantly reduced by GTP and GDP, but not by GMP. This Thioalkalivibrio sulfidiphilus (strain HL-EbGR7) protein is Peptide chain release factor 3.